A 553-amino-acid polypeptide reads, in one-letter code: MLSDIEIARSAKLEPVMNIAKNLSIPGDFLNSYGKFMAKISHSFLKNLNIRKGKLILVTAMTPTPAGEGKTTTSIGLSMALNKIGHRSIVTLREPSLGPVFGIKGGAAGGGYSQVLPMEDINLHFTGDIHAVGTAHNLISAVIDSHIRFGNDLDIDLTKITWPRAIDMNDRALRNIVIALGGHANGYPREDGFVITAASEIMAILCLSKDLQDLKNRVGNIVIGWSKNGKPVTVHELGIEGAIAVILKDAINPNLVQTIENTPAFIHGGPFANIAHGTNSIIATKMALGLSDYVVTESGFGSDLGAEKFFDFVSPAADLKPSVAVIVATVRAIKYHGGVPLKDLENENLEAIKKGIENLKIHIENVKKFNVPVVVALNRFATDTERELDLVVNTVEKLGTKISLNEAFAKGSEGAIDLAKKVIEVADESKFSPIYKWDSPVEEKIKILATEIYRAKDVSFSKEAITSLKQIEKAGLSNLPVIVAKTQYSISDDPSKLGAPDGYVFNVRNFKLSSGAGFIVAISGEIMLMPGLGKKPNAVNIDIDEKGNITGLF.

Residue 64-71 (TPAGEGKT) coordinates ATP.

The protein belongs to the formate--tetrahydrofolate ligase family.

The enzyme catalyses (6S)-5,6,7,8-tetrahydrofolate + formate + ATP = (6R)-10-formyltetrahydrofolate + ADP + phosphate. Its pathway is one-carbon metabolism; tetrahydrofolate interconversion. In Pseudothermotoga lettingae (strain ATCC BAA-301 / DSM 14385 / NBRC 107922 / TMO) (Thermotoga lettingae), this protein is Formate--tetrahydrofolate ligase.